The chain runs to 292 residues: Polyamine aminopropyltransferase 1 (292 aa).

The 244-residue stretch at 1–244 (MELGMFRLNI…YVNSFVFASD (244 aa)) folds into the PABS domain. Residue Gln-35 participates in S-methyl-5'-thioadenosine binding. The spermidine site is built by His-66 and Glu-90. Residues Asp-110 and 142–143 (DG) contribute to the S-methyl-5'-thioadenosine site. Catalysis depends on Asp-163, which acts as the Proton acceptor.

The protein belongs to the spermidine/spermine synthase family. As to quaternary structure, homodimer or homotetramer.

The protein localises to the cytoplasm. The enzyme catalyses norspermine + S-adenosyl 3-(methylsulfanyl)propylamine = caldopentamine + S-methyl-5'-thioadenosine + 2 H(+). It carries out the reaction norspermidine + S-adenosyl 3-(methylsulfanyl)propylamine = norspermine + S-methyl-5'-thioadenosine + H(+). The catalysed reaction is S-adenosyl 3-(methylsulfanyl)propylamine + spermidine = thermospermine + S-methyl-5'-thioadenosine + H(+). Functionally, involved in the biosynthesis of polyamines which are thought to support the growth of thermophilic microorganisms under high-temperature conditions. It seems that long-chain and branched-chain of polyamines effectively stabilize DNA and RNA, respectively. Catalyzes the irreversible transfer of a propylamine group from the amino donor S-adenosylmethioninamine (decarboxy-AdoMet) to norspermidine, spermidine and norspermine to yield norspermine, thermospermine and caldopentamine, respectively. It can also synthesize sym-norspermidine (bis(3-aminopropyl)amine) from 1,3-diaminopropane with a very low activity. The biosynthesis of caldohexamine and caldoheptamine from caldopentamine has been also observed. This chain is Polyamine aminopropyltransferase 1, found in Hyperthermus butylicus (strain DSM 5456 / JCM 9403 / PLM1-5).